The chain runs to 55 residues: Large ribosomal subunit protein bL33 (55 aa).

The protein belongs to the bacterial ribosomal protein bL33 family.

The chain is Large ribosomal subunit protein bL33 from Vibrio atlanticus (strain LGP32) (Vibrio splendidus (strain Mel32)).